We begin with the raw amino-acid sequence, 231 residues long: 7-cyano-7-deazaguanine synthase (231 aa).

An ATP-binding site is contributed by 7–17 (LSSGLDSVAAL). 4 residues coordinate Zn(2+): Cys195, Cys203, Cys206, and Cys209.

It belongs to the QueC family. The cofactor is Zn(2+).

It catalyses the reaction 7-carboxy-7-deazaguanine + NH4(+) + ATP = 7-cyano-7-deazaguanine + ADP + phosphate + H2O + H(+). The protein operates within purine metabolism; 7-cyano-7-deazaguanine biosynthesis. Catalyzes the ATP-dependent conversion of 7-carboxy-7-deazaguanine (CDG) to 7-cyano-7-deazaguanine (preQ(0)). In Methanosarcina mazei (strain ATCC BAA-159 / DSM 3647 / Goe1 / Go1 / JCM 11833 / OCM 88) (Methanosarcina frisia), this protein is 7-cyano-7-deazaguanine synthase.